Reading from the N-terminus, the 99-residue chain is uncharacterized protein (99 aa).

The segment at 50 to 77 is disordered; sequence SAHWEDARSSGGTSPIRARAGSEGRGCQ.

This is an uncharacterized protein from Homo sapiens (Human).